The primary structure comprises 450 residues: tRNA-2-methylthio-N(6)-dimethylallyladenosine synthase (450 aa).

The region spanning 8–124 (RTLHITTWGC…LPELIAEIEA (117 aa)) is the MTTase N-terminal domain. Residues Cys17, Cys52, Cys87, Cys162, Cys166, and Cys169 each coordinate [4Fe-4S] cluster. The Radical SAM core domain occupies 148 to 380 (ASQGPIAFLA…QAVLRDQQHA (233 aa)). The region spanning 383-445 (RAQVGRSFEV…PNSLMASLTQ (63 aa)) is the TRAM domain.

The protein belongs to the methylthiotransferase family. MiaB subfamily. Monomer. [4Fe-4S] cluster is required as a cofactor.

It localises to the cytoplasm. It catalyses the reaction N(6)-dimethylallyladenosine(37) in tRNA + (sulfur carrier)-SH + AH2 + 2 S-adenosyl-L-methionine = 2-methylsulfanyl-N(6)-dimethylallyladenosine(37) in tRNA + (sulfur carrier)-H + 5'-deoxyadenosine + L-methionine + A + S-adenosyl-L-homocysteine + 2 H(+). Functionally, catalyzes the methylthiolation of N6-(dimethylallyl)adenosine (i(6)A), leading to the formation of 2-methylthio-N6-(dimethylallyl)adenosine (ms(2)i(6)A) at position 37 in tRNAs that read codons beginning with uridine. This Acidiphilium cryptum (strain JF-5) protein is tRNA-2-methylthio-N(6)-dimethylallyladenosine synthase.